A 331-amino-acid chain; its full sequence is UPF0284 protein PF0303 (331 aa).

This sequence belongs to the UPF0284 family.

This chain is UPF0284 protein PF0303, found in Pyrococcus furiosus (strain ATCC 43587 / DSM 3638 / JCM 8422 / Vc1).